Consider the following 40-residue polypeptide: Antimicrobial peptide 2 (40 aa).

The Chitin-binding type-1 domain maps to 1-40; that stretch reads AQCGAQGGGATCPGGLCCSQWGWCGSTPKYCGAGCQSNCR. Intrachain disulfides connect cysteine 3-cysteine 18, cysteine 12-cysteine 24, cysteine 17-cysteine 31, and cysteine 35-cysteine 39.

Post-translationally, not glycosylated.

Its function is as follows. Antimicrobial peptide active against plant pathogenic fungi and Gram-negative and -positive bacteria. This chain is Antimicrobial peptide 2, found in Fagopyrum esculentum (Common buckwheat).